Reading from the N-terminus, the 232-residue chain is Multiple organellar RNA editing factor 6, mitochondrial (232 aa).

A mitochondrion-targeting transit peptide spans 1–67 (MAKTLSRSTA…TIRTRMDRSG (67 aa)). The disordered stretch occupies residues 208 to 232 (TNQRGSDKPKYHDRIRNVRRRENMR). Over residues 212-232 (GSDKPKYHDRIRNVRRRENMR) the composition is skewed to basic and acidic residues.

This sequence belongs to the MORF family. Heterodimers with MORF8/RIP1, MORF3/RIP3, MORF6/RIP6, MORF7/RIP7 and MORF9/RIP9.

The protein resides in the mitochondrion. Involved in organellar RNA editing. Required for the processing of few RNA editing sites in mitochondria. In Arabidopsis thaliana (Mouse-ear cress), this protein is Multiple organellar RNA editing factor 6, mitochondrial.